An 84-amino-acid polypeptide reads, in one-letter code: Transcription elongation factor 1 homolog (84 aa).

Positions 26, 29, 50, and 53 each coordinate Zn(2+).

Belongs to the ELOF1 family.

The protein localises to the nucleus. Its function is as follows. Transcription elongation factor implicated in the maintenance of proper chromatin structure in actively transcribed regions. The chain is Transcription elongation factor 1 homolog from Caenorhabditis elegans.